The chain runs to 329 residues: Cathepsin K (329 aa).

A signal peptide spans 1-15; that stretch reads MWGLKVLLLPVVSFA. Positions 16–114 are cleaved as a propeptide — activation peptide; it reads LYPEEILDTH…TLYIPEWEGR (99 aa). Residue Asn-103 is glycosylated (N-linked (GlcNAc...) asparagine). 3 disulfides stabilise this stretch: Cys-136/Cys-177, Cys-170/Cys-210, and Cys-269/Cys-318. Cys-139 is a catalytic residue. Active-site residues include His-276 and Asn-296.

Belongs to the peptidase C1 family. Predominantly expressed in osteoclasts (bones). Expressed in thyroid epithelial cells.

The protein localises to the lysosome. Its subcellular location is the secreted. The protein resides in the apical cell membrane. It catalyses the reaction Broad proteolytic activity. With small-molecule substrates and inhibitors, the major determinant of specificity is P2, which is preferably Leu, Met &gt; Phe, and not Arg.. Its function is as follows. Thiol protease involved in osteoclastic bone resorption and may participate partially in the disorder of bone remodeling. Displays potent endoprotease activity against fibrinogen at acid pH. May play an important role in extracellular matrix degradation. Involved in the release of thyroid hormone thyroxine (T4) by limited proteolysis of TG/thyroglobulin in the thyroid follicle lumen. In Homo sapiens (Human), this protein is Cathepsin K (CTSK).